A 163-amino-acid polypeptide reads, in one-letter code: Phosphopantetheine adenylyltransferase (163 aa).

Ser11 contributes to the substrate binding site. Residues 11–12 (SF) and His19 contribute to the ATP site. Lys43, Leu75, and Arg89 together coordinate substrate. ATP is bound by residues 90-92 (GLR), Glu100, and 125-131 (FGYLSSS).

This sequence belongs to the bacterial CoaD family. As to quaternary structure, homohexamer. The cofactor is Mg(2+).

It is found in the cytoplasm. It catalyses the reaction (R)-4'-phosphopantetheine + ATP + H(+) = 3'-dephospho-CoA + diphosphate. It participates in cofactor biosynthesis; coenzyme A biosynthesis; CoA from (R)-pantothenate: step 4/5. In terms of biological role, reversibly transfers an adenylyl group from ATP to 4'-phosphopantetheine, yielding dephospho-CoA (dPCoA) and pyrophosphate. This is Phosphopantetheine adenylyltransferase from Geobacter metallireducens (strain ATCC 53774 / DSM 7210 / GS-15).